The following is a 344-amino-acid chain: Phosphoribosylformylglycinamidine cyclo-ligase (344 aa).

It belongs to the AIR synthase family.

It is found in the cytoplasm. It catalyses the reaction 2-formamido-N(1)-(5-O-phospho-beta-D-ribosyl)acetamidine + ATP = 5-amino-1-(5-phospho-beta-D-ribosyl)imidazole + ADP + phosphate + H(+). It functions in the pathway purine metabolism; IMP biosynthesis via de novo pathway; 5-amino-1-(5-phospho-D-ribosyl)imidazole from N(2)-formyl-N(1)-(5-phospho-D-ribosyl)glycinamide: step 2/2. The sequence is that of Phosphoribosylformylglycinamidine cyclo-ligase from Glaesserella parasuis serovar 5 (strain SH0165) (Haemophilus parasuis).